The sequence spans 287 residues: Pyridoxal kinase PdxY (287 aa).

Substrate contacts are provided by residues serine 9 and 44–45 (TQ). Positions 111, 147, and 180 each coordinate ATP. Residue aspartate 221 coordinates substrate.

This sequence belongs to the pyridoxine kinase family. PdxY subfamily. Homodimer. It depends on Mg(2+) as a cofactor.

It carries out the reaction pyridoxal + ATP = pyridoxal 5'-phosphate + ADP + H(+). It participates in cofactor metabolism; pyridoxal 5'-phosphate salvage; pyridoxal 5'-phosphate from pyridoxal: step 1/1. Functionally, pyridoxal kinase involved in the salvage pathway of pyridoxal 5'-phosphate (PLP). Catalyzes the phosphorylation of pyridoxal to PLP. The chain is Pyridoxal kinase PdxY from Paraburkholderia phymatum (strain DSM 17167 / CIP 108236 / LMG 21445 / STM815) (Burkholderia phymatum).